The primary structure comprises 424 residues: Light-independent protochlorophyllide reductase subunit N (424 aa).

Residues Cys-27, Cys-52, and Cys-113 each contribute to the [4Fe-4S] cluster site.

This sequence belongs to the BchN/ChlN family. As to quaternary structure, protochlorophyllide reductase is composed of three subunits; BchL, BchN and BchB. Forms a heterotetramer of two BchB and two BchN subunits. [4Fe-4S] cluster is required as a cofactor.

It catalyses the reaction chlorophyllide a + oxidized 2[4Fe-4S]-[ferredoxin] + 2 ADP + 2 phosphate = protochlorophyllide a + reduced 2[4Fe-4S]-[ferredoxin] + 2 ATP + 2 H2O. The protein operates within porphyrin-containing compound metabolism; bacteriochlorophyll biosynthesis (light-independent). In terms of biological role, component of the dark-operative protochlorophyllide reductase (DPOR) that uses Mg-ATP and reduced ferredoxin to reduce ring D of protochlorophyllide (Pchlide) to form chlorophyllide a (Chlide). This reaction is light-independent. The NB-protein (BchN-BchB) is the catalytic component of the complex. This Halorhodospira halophila (strain DSM 244 / SL1) (Ectothiorhodospira halophila (strain DSM 244 / SL1)) protein is Light-independent protochlorophyllide reductase subunit N.